Here is a 185-residue protein sequence, read N- to C-terminus: Ribosome-recycling factor (185 aa).

It belongs to the RRF family.

Its subcellular location is the cytoplasm. Responsible for the release of ribosomes from messenger RNA at the termination of protein biosynthesis. May increase the efficiency of translation by recycling ribosomes from one round of translation to another. The protein is Ribosome-recycling factor of Shewanella piezotolerans (strain WP3 / JCM 13877).